Here is a 404-residue protein sequence, read N- to C-terminus: Glycosylated lysosomal membrane protein (404 aa).

An N-terminal signal peptide occupies residues 1-35 (MRGSVERGWGWGHCASSPLLLWTLLLFAAPFGLLG). Residues 36 to 371 (EKTRQLSLEV…GRLVPTSPGH (336 aa)) lie on the Lumenal side of the membrane. N-linked (GlcNAc...) asparagine glycosylation is found at Asn-65, Asn-134, Asn-159, Asn-186, and Asn-229. A helical membrane pass occupies residues 372-392 (HGSALGAPGLMLLGGGLVLLL). The Cytoplasmic portion of the chain corresponds to 393-404 (HHRKYSEYQSIN). The Lysosomal targeting motif motif lies at 400–404 (YQSIN).

This sequence belongs to the GLMP family. Interacts (via lumenal domain) with lysosomal protein MFSD1; the interaction starts while both proteins are still in the endoplasmic reticulum and is required for stabilization of MFSD1 in lysosomes but has no direct effect on its targeting to lysosomes or transporter activity. In terms of processing, highly N-glycosylated. N-glycosylation is essential for GLMP stability and for MFSD1 lysosomal localization.

It localises to the lysosome membrane. Required to protect lysosomal transporter MFSD1 from lysosomal proteolysis and for MFSD1 lysosomal localization. The sequence is that of Glycosylated lysosomal membrane protein from Pongo abelii (Sumatran orangutan).